A 131-amino-acid polypeptide reads, in one-letter code: Protein SOB FIVE-LIKE 4 (131 aa).

Disordered regions lie at residues 1 to 21 and 40 to 131; these read MDKE…SSPI and IYNY…YRMK. Residues 8 to 18 are compositionally biased toward polar residues; sequence SSESGWTTYLS. The SOFL-A motif lies at 11–16; it reads SGWTTY. Positions 46–58 are enriched in basic and acidic residues; it reads KVEHEEERNKDSD. Residues 60–69 carry the SOFL-B motif; that stretch reads SMASDASSGP. Basic and acidic residues predominate over residues 79–109; sequence KALDLKNGKNEGNSKSKNDDDHHNHYHDGKK. The short motif at 107 to 114 is the Nuclear localization signal element; that stretch reads GKKTSNSY. Basic residues predominate over residues 114–131; sequence YRKKDKKKRENKSTYRMK.

Belongs to the SOFL plant protein family. Expressed, at low levels, in seedlings, roots, flowers and siliques.

It localises to the cytoplasm. It is found in the nucleus. Involved in cytokinin-mediated development. The chain is Protein SOB FIVE-LIKE 4 from Arabidopsis thaliana (Mouse-ear cress).